A 238-amino-acid chain; its full sequence is uncharacterized protein (238 aa).

The first 19 residues, 1-19 (MKINLFFVFLFELLHFVAA), serve as a signal peptide directing secretion. Residues 20 to 197 (YSCEGDESAA…LALYGHLSQK (178 aa)) are Lumenal-facing. A helical transmembrane segment spans residues 198–216 (YTPLGMNVAIFGISAYIMY). Topologically, residues 217 to 238 (RSSKKAKQKQAAAAAAAAAKKK) are cytoplasmic.

The protein resides in the endoplasmic reticulum membrane. This is an uncharacterized protein from Schizosaccharomyces pombe (strain 972 / ATCC 24843) (Fission yeast).